The chain runs to 147 residues: Sec-independent protein translocase protein TatB (147 aa).

The chain crosses the membrane as a helical span at residues 2–22 (FSSIGWPEIFTVLILGLIIIG). The tract at residues 96–147 (FDPKKIMASGTEGEAYRERGINPQPAGDSASPQTPSNKESQPKAGFSWDDIT) is disordered. Residues 125-134 (ASPQTPSNKE) show a composition bias toward polar residues.

The protein belongs to the TatB family. As to quaternary structure, the Tat system comprises two distinct complexes: a TatABC complex, containing multiple copies of TatA, TatB and TatC subunits, and a separate TatA complex, containing only TatA subunits. Substrates initially bind to the TatABC complex, which probably triggers association of the separate TatA complex to form the active translocon.

Its subcellular location is the cell membrane. Functionally, part of the twin-arginine translocation (Tat) system that transports large folded proteins containing a characteristic twin-arginine motif in their signal peptide across membranes. Together with TatC, TatB is part of a receptor directly interacting with Tat signal peptides. TatB may form an oligomeric binding site that transiently accommodates folded Tat precursor proteins before their translocation. In Corynebacterium diphtheriae (strain ATCC 700971 / NCTC 13129 / Biotype gravis), this protein is Sec-independent protein translocase protein TatB.